The chain runs to 102 residues: MTSSSSPSSSSSKCSNGASVCFIPKEWNDYPTSTLECVLTTDIKEHMKNYNEVVGAPISVGGVSAKLEFFGPNIWMRKDGDEKSKPNSKDYASRPIRDHSKI.

The tract at residues 77–102 is disordered; sequence RKDGDEKSKPNSKDYASRPIRDHSKI.

This is an uncharacterized protein from Microplitis demolitor (Parasitoid wasp).